Consider the following 184-residue polypeptide: Cysteine proteinase inhibitor 3 (184 aa).

An N-terminal signal peptide occupies residues Met-1 to Gly-35. The region spanning Gly-48–Gly-134 is the Cystatin domain. The short motif at Gln-90–Gly-94 is the Secondary area of contact element. The tract at residues Ser-138 to Asn-165 is disordered.

It belongs to the cystatin family. Phytocystatin subfamily.

It localises to the secreted. Its function is as follows. Specific inhibitor of cysteine proteinases. Probably involved in the regulation of endogenous processes and in defense against pests and pathogens. The protein is Cysteine proteinase inhibitor 3 of Oryza sativa subsp. japonica (Rice).